Here is a 209-residue protein sequence, read N- to C-terminus: Pyroglutamyl-peptidase 1 (209 aa).

Catalysis depends on residues Glu85, Cys149, and His168.

It belongs to the peptidase C15 family. Monomer.

It localises to the cytoplasm. The enzyme catalyses Release of an N-terminal pyroglutamyl group from a polypeptide, the second amino acid generally not being Pro.. Functionally, removes 5-oxoproline from various penultimate amino acid residues except L-proline. This Rattus norvegicus (Rat) protein is Pyroglutamyl-peptidase 1 (Pgpep1).